The primary structure comprises 274 residues: Large ribosomal subunit protein uL2cz/uL2cy (274 aa).

Disordered regions lie at residues 1–24 (MAIHLYKTSTPSTRNGTVDSQVKS) and 223–274 (MNPV…RRSK). Polar residues predominate over residues 7-24 (KTSTPSTRNGTVDSQVKS).

Belongs to the universal ribosomal protein uL2 family. Part of the 50S ribosomal subunit.

It is found in the plastid. The protein resides in the chloroplast. This chain is Large ribosomal subunit protein uL2cz/uL2cy (rpl2-A), found in Nicotiana sylvestris (Wood tobacco).